Here is a 175-residue protein sequence, read N- to C-terminus: R-phycoerythrin subunit beta (175 aa).

Residue C82 coordinates (2R,3E)-phycoerythrobilin.

Belongs to the phycobiliprotein family. As to quaternary structure, homodimer. Post-translationally, contains one covalently linked phycoerythrobilin chromophore.

Functionally, green-light absorbing phycoerythrin of unknown function. This is R-phycoerythrin subunit beta (cpeB) from Prochlorococcus marinus subsp. pastoris (strain CCMP1986 / NIES-2087 / MED4).